Reading from the N-terminus, the 213-residue chain is Glycerol-3-phosphate acyltransferase (213 aa).

The next 6 helical transmembrane spans lie at 3–23, 55–75, 80–100, 110–130, 142–162, and 163–183; these read ILLL…LWIG, ITFL…IWLG, SPLI…FTGF, AGVL…VFAL, SITA…IHFL, and LDGY…VIIF.

It belongs to the PlsY family. As to quaternary structure, probably interacts with PlsX.

The protein localises to the cell membrane. The enzyme catalyses an acyl phosphate + sn-glycerol 3-phosphate = a 1-acyl-sn-glycero-3-phosphate + phosphate. The protein operates within lipid metabolism; phospholipid metabolism. Catalyzes the transfer of an acyl group from acyl-phosphate (acyl-PO(4)) to glycerol-3-phosphate (G3P) to form lysophosphatidic acid (LPA). This enzyme utilizes acyl-phosphate as fatty acyl donor, but not acyl-CoA or acyl-ACP. This is Glycerol-3-phosphate acyltransferase from Streptococcus thermophilus (strain CNRZ 1066).